We begin with the raw amino-acid sequence, 583 residues long: Proline--tRNA ligase (583 aa).

It belongs to the class-II aminoacyl-tRNA synthetase family. ProS type 1 subfamily. As to quaternary structure, homodimer.

It is found in the cytoplasm. The catalysed reaction is tRNA(Pro) + L-proline + ATP = L-prolyl-tRNA(Pro) + AMP + diphosphate. Functionally, catalyzes the attachment of proline to tRNA(Pro) in a two-step reaction: proline is first activated by ATP to form Pro-AMP and then transferred to the acceptor end of tRNA(Pro). As ProRS can inadvertently accommodate and process non-cognate amino acids such as alanine and cysteine, to avoid such errors it has two additional distinct editing activities against alanine. One activity is designated as 'pretransfer' editing and involves the tRNA(Pro)-independent hydrolysis of activated Ala-AMP. The other activity is designated 'posttransfer' editing and involves deacylation of mischarged Ala-tRNA(Pro). The misacylated Cys-tRNA(Pro) is not edited by ProRS. The sequence is that of Proline--tRNA ligase from Methylococcus capsulatus (strain ATCC 33009 / NCIMB 11132 / Bath).